A 324-amino-acid chain; its full sequence is Zinc metalloproteinase leucurolysin-B (324 aa).

Residues 1–119 form the Peptidase M12B domain; that stretch reads DTVLLNRISH…LNPQCILNEP (119 aa). D11 contributes to the Ca(2+) binding site. Cystine bridges form between C34/C114, C74/C98, and C76/C81. Residue H59 coordinates Zn(2+). E60 is a catalytic residue. Zn(2+) contacts are provided by H63 and H69. Residue N97 is glycosylated (N-linked (GlcNAc...) asparagine). Residues C114, N117, V129, N132, L134, E136, E139, and D142 each contribute to the Ca(2+) site. The 87-residue stretch at 127 to 213 folds into the Disintegrin domain; the sequence is PPVCGNELLE…QCPTDDFKRN (87 aa). 13 disulfide bridges follow: C130/C159, C141/C154, C143/C149, C153/C176, C167/C173, C172/C198, C185/C205, C192/C224, C217/C229, C236/C286, C251/C295, C264/C274, and C281/C315. The D/ECD-tripeptide signature appears at 191 to 193; that stretch reads ECD. Residues N296 and N305 are each glycosylated (N-linked (GlcNAc...) asparagine).

The protein belongs to the venom metalloproteinase (M12B) family. P-III subfamily. P-IIIa sub-subfamily. As to quaternary structure, monomer. The cofactor is Zn(2+). In terms of processing, N-glycosylated. Post-translationally, the N-terminus is blocked. As to expression, expressed by the venom gland.

The protein resides in the secreted. With respect to regulation, inhibited by EDTA, but not by PMSF. Pre-incubation with 2 mM DTT completely abolishes activity. In terms of biological role, snake venom zinc metalloproteinase that acts as a potent hemorrhagic toxin. Hydrolyzes the insulin B chain at the 14-Ala-|-Leu-15 bond but not the 16-Tyr-|-Leu-17 bond. Degrades the alpha-chain of fibrin and hydrolyzes the Aalpha-chain of fibrinogen (FGA) while leaving the beta and gamma chains unaffected. Degrades type-I collagen and its gelatin. Degrades the alpha-1 chain of type-IV collagen and its gelatin but not the alpha-2 chain. Degrades plasma fibronectin, plasma vitronectin and basement membrane enactin. It inhibits collagen-induced platelet aggregation. The sequence is that of Zinc metalloproteinase leucurolysin-B from Bothrops leucurus (Whitetail lancehead).